The sequence spans 415 residues: MTSPVLNPALPATAAAPVAATPSAVGSAGIVAPVFLRFDEPLPLASGQTLNGYELAIETYGTLNAQRTNAVLVCHALNASHHVAGVSADNPKDVGWWDNMVGPGKPVDTNRYFVIGVNNLGSCFGSTGPASINPATGRPWGAAFPVLTVEDWVRAQARVADHFGIERFAAVMGGSLGGMQALSWAITCPQRVANCVVVASTPRLSAQNIGFNEVARRAIITDPDFHGGDYYAHGTVPGRGLSVARMIGHITYLSDDDMAEKFGRTRREPAADGAYRYGYDVEFEVESYLRYQGEKFSRYFDANTYLLITRALDYFDPARATGGDLARALAPATADFLLVSFSTDWRFPPERSREMVRALLKNGSPVTYAEIDAPHGHDAFLLDDARYHAVVRGYYERIARELGLNGAVAPEGNPA.

Residues 69–383 form the AB hydrolase-1 domain; that stretch reads NAVLVCHALN…PHGHDAFLLD (315 aa). The Nucleophile role is filled by Ser-175. Residue Arg-245 coordinates substrate. Active-site residues include Asp-344 and His-377. Position 378 (Asp-378) interacts with substrate.

The protein belongs to the AB hydrolase superfamily. MetX family. Homodimer.

It is found in the cytoplasm. The catalysed reaction is L-homoserine + succinyl-CoA = O-succinyl-L-homoserine + CoA. It functions in the pathway amino-acid biosynthesis; L-methionine biosynthesis via de novo pathway; O-succinyl-L-homoserine from L-homoserine: step 1/1. Its function is as follows. Transfers a succinyl group from succinyl-CoA to L-homoserine, forming succinyl-L-homoserine. In Bordetella parapertussis (strain 12822 / ATCC BAA-587 / NCTC 13253), this protein is Homoserine O-succinyltransferase.